The chain runs to 219 residues: Probable nicotinate-nucleotide adenylyltransferase (219 aa).

This sequence belongs to the NadD family.

The enzyme catalyses nicotinate beta-D-ribonucleotide + ATP + H(+) = deamido-NAD(+) + diphosphate. It participates in cofactor biosynthesis; NAD(+) biosynthesis; deamido-NAD(+) from nicotinate D-ribonucleotide: step 1/1. In terms of biological role, catalyzes the reversible adenylation of nicotinate mononucleotide (NaMN) to nicotinic acid adenine dinucleotide (NaAD). The sequence is that of Probable nicotinate-nucleotide adenylyltransferase from Hahella chejuensis (strain KCTC 2396).